Reading from the N-terminus, the 197-residue chain is MKRQLALGTNNLNKVKEVSSILMELGIQILTPKDLKVSFNPEETGSTFKENALIKAKELFYLTKIPSIADDSGICVSALKDEPGVYSARFGGPELNDEGRALLLLEKLKGNQNRKAYYACAIAYVDESTEQSFEGRCEGLISEEYDRIGIYGFGYDPIFIFPPLQKPFSQIQEETKNSVSHRKKALDELLKFLKTKP.

9-14 (TNNLNK) provides a ligand contact to substrate. Residues Glu-42 and Asp-71 each contribute to the Mg(2+) site. Asp-71 (proton acceptor) is an active-site residue. Substrate contacts are provided by residues Ser-72, 153 to 156 (FGYD), Lys-176, and 181 to 182 (HR).

The protein belongs to the HAM1 NTPase family. In terms of assembly, homodimer. Mg(2+) serves as cofactor.

The catalysed reaction is XTP + H2O = XMP + diphosphate + H(+). It carries out the reaction dITP + H2O = dIMP + diphosphate + H(+). It catalyses the reaction ITP + H2O = IMP + diphosphate + H(+). Its function is as follows. Pyrophosphatase that catalyzes the hydrolysis of nucleoside triphosphates to their monophosphate derivatives, with a high preference for the non-canonical purine nucleotides XTP (xanthosine triphosphate), dITP (deoxyinosine triphosphate) and ITP. Seems to function as a house-cleaning enzyme that removes non-canonical purine nucleotides from the nucleotide pool, thus preventing their incorporation into DNA/RNA and avoiding chromosomal lesions. The protein is dITP/XTP pyrophosphatase of Leptospira interrogans serogroup Icterohaemorrhagiae serovar copenhageni (strain Fiocruz L1-130).